The chain runs to 347 residues: S-adenosylmethionine:tRNA ribosyltransferase-isomerase (347 aa).

Belongs to the QueA family. As to quaternary structure, monomer.

It localises to the cytoplasm. It catalyses the reaction 7-aminomethyl-7-carbaguanosine(34) in tRNA + S-adenosyl-L-methionine = epoxyqueuosine(34) in tRNA + adenine + L-methionine + 2 H(+). The protein operates within tRNA modification; tRNA-queuosine biosynthesis. Transfers and isomerizes the ribose moiety from AdoMet to the 7-aminomethyl group of 7-deazaguanine (preQ1-tRNA) to give epoxyqueuosine (oQ-tRNA). This Pseudomonas aeruginosa (strain UCBPP-PA14) protein is S-adenosylmethionine:tRNA ribosyltransferase-isomerase.